The following is a 338-amino-acid chain: Eukaryotic translation initiation factor 3 subunit H (338 aa).

The MPN domain maps to 22–154; sequence VQCDGLAVMK…LKAYRLTPQA (133 aa).

The protein belongs to the eIF-3 subunit H family. In terms of assembly, component of the eukaryotic translation initiation factor 3 (eIF-3) complex. The eIF-3 complex interacts with pix. Interacts with mxt.

It localises to the cytoplasm. Functionally, component of the eukaryotic translation initiation factor 3 (eIF-3) complex, which is involved in protein synthesis of a specialized repertoire of mRNAs and, together with other initiation factors, stimulates binding of mRNA and methionyl-tRNAi to the 40S ribosome. The eIF-3 complex specifically targets and initiates translation of a subset of mRNAs involved in cell proliferation. The sequence is that of Eukaryotic translation initiation factor 3 subunit H from Drosophila sechellia (Fruit fly).